Here is a 241-residue protein sequence, read N- to C-terminus: Endodeoxyribonuclease NucC (241 aa).

Active-site residues include D73, E104, and K106. Mg(2+)-binding residues include D73 and E104.

The protein belongs to the NucC endonuclease family. Self-oligomerizes. Forms homotrimers; in the presence of cAAA the trimers associate face-to-face to form homohexamers. The 2 cAAA-binding sites are on the exterior of the hexamer at the three-way junction, there are maximally 2 cyclic nucleotides per hexamer. Mg(2+) serves as cofactor.

Its activity is regulated as follows. Activated by cAAA and to a lesser extent cAA; both cyclic nucleotides are products of its cognate CD-NTase. Cyclic nucleotide binding causes hexamerization. Functionally, effector DNase of a CBASS antivirus system. CBASS (cyclic oligonucleotide-based antiphage signaling system) provides immunity against bacteriophage. The CD-NTase protein synthesizes cyclic nucleotides in response to infection; these serve as specific second messenger signals. The signals activate a diverse range of effectors, leading to bacterial cell death and thus abortive phage infection. A type III-C(AAA) CBASS system. In terms of biological role, a cyclic nucleotide-activated dsDNase. In the presence of 3',3',3'-cyclic AMP-AMP-AMP (cAAA) and to a lesser extent cyclic-di-AMP (c-di-AMP), endonucleolytically degrades dsDNA. Binds one cAAA in a pocket on one surface of the trimer; cAAA binding promotes hexamerization which is probably necessary for nuclease activation. The nuclease digests dsDNA to about 50 bp lengths. DNA has been modeled to contact a pair of juxtaposed active sites (one from each layer of the hexamer), accounting for cleavage on both strands. The protein is Endodeoxyribonuclease NucC of Pseudomonas aeruginosa.